We begin with the raw amino-acid sequence, 370 residues long: Histidinol-phosphate aminotransferase 1 (370 aa).

Position 222 is an N6-(pyridoxal phosphate)lysine (K222).

This sequence belongs to the class-II pyridoxal-phosphate-dependent aminotransferase family. Histidinol-phosphate aminotransferase subfamily. Homodimer. Pyridoxal 5'-phosphate is required as a cofactor.

It catalyses the reaction L-histidinol phosphate + 2-oxoglutarate = 3-(imidazol-4-yl)-2-oxopropyl phosphate + L-glutamate. Its pathway is amino-acid biosynthesis; L-histidine biosynthesis; L-histidine from 5-phospho-alpha-D-ribose 1-diphosphate: step 7/9. This is Histidinol-phosphate aminotransferase 1 from Bacillus cereus (strain ATCC 10987 / NRS 248).